The primary structure comprises 105 residues: BLOC-1-related complex subunit 7 (105 aa).

This sequence belongs to the BORCS7 family. In terms of assembly, component of the BLOC-one-related complex (BORC) which is composed of BLOC1S1, BLOC1S2, BORCS5, BORCS6, BORCS7, BORCS8, KXD1 and SNAPIN.

It is found in the lysosome membrane. Its function is as follows. As part of the BORC complex may play a role in lysosomes movement and localization at the cell periphery. Associated with the cytosolic face of lysosomes, the BORC complex may recruit ARL8B and couple lysosomes to microtubule plus-end-directed kinesin motor. In Mus musculus (Mouse), this protein is BLOC-1-related complex subunit 7.